The chain runs to 399 residues: Bombesin receptor subtype-3 (399 aa).

The Extracellular portion of the chain corresponds to Met1–Ser41. N-linked (GlcNAc...) asparagine glycosylation is found at Asn10, Asn18, and Asn29. Residues Pro42 to Leu63 traverse the membrane as a helical segment. The Cytoplasmic portion of the chain corresponds to Gly64–Pro82. Residues Asn83 to Val103 traverse the membrane as a helical segment. The Extracellular portion of the chain corresponds to Asp104 to Lys121. The cysteines at positions 120 and 203 are disulfide-linked. A helical transmembrane segment spans residues Val122–Ala143. Over Asp144–Lys163 the chain is Cytoplasmic. A helical transmembrane segment spans residues Thr164–Ile184. The Extracellular segment spans residues Phe185–Leu220. The chain crosses the membrane as a helical span at residues Cys221 to Ala241. The Cytoplasmic segment spans residues Arg242–Thr272. A helical transmembrane segment spans residues Val273–Tyr293. Over His294–Ile313 the chain is Extracellular. The helical transmembrane segment at Phe314–Leu333 threads the bilayer. At Ser334–Val399 the chain is on the cytoplasmic side. A lipid anchor (S-palmitoyl cysteine) is attached at Cys347.

This sequence belongs to the G-protein coupled receptor 1 family. As to quaternary structure, interacts with C6orf89.

Its subcellular location is the cell membrane. Role in sperm cell division, maturation, or function. This receptor mediates its action by association with G proteins that activate a phosphatidylinositol-calcium second messenger system. The sequence is that of Bombesin receptor subtype-3 (Brs3) from Rattus norvegicus (Rat).